The chain runs to 378 residues: Lipoyl synthase, mitochondrial (378 aa).

Residues cysteine 97, cysteine 102, cysteine 108, cysteine 128, cysteine 132, cysteine 135, and serine 343 each coordinate [4Fe-4S] cluster. One can recognise a Radical SAM core domain in the interval 111–332 (GSDKSAATAT…RQRALDMGFL (222 aa)).

It belongs to the radical SAM superfamily. Lipoyl synthase family. It depends on [4Fe-4S] cluster as a cofactor.

Its subcellular location is the mitochondrion. It catalyses the reaction [[Fe-S] cluster scaffold protein carrying a second [4Fe-4S](2+) cluster] + N(6)-octanoyl-L-lysyl-[protein] + 2 oxidized [2Fe-2S]-[ferredoxin] + 2 S-adenosyl-L-methionine + 4 H(+) = [[Fe-S] cluster scaffold protein] + N(6)-[(R)-dihydrolipoyl]-L-lysyl-[protein] + 4 Fe(3+) + 2 hydrogen sulfide + 2 5'-deoxyadenosine + 2 L-methionine + 2 reduced [2Fe-2S]-[ferredoxin]. Its pathway is protein modification; protein lipoylation via endogenous pathway; protein N(6)-(lipoyl)lysine from octanoyl-[acyl-carrier-protein]: step 2/2. Functionally, catalyzes the radical-mediated insertion of two sulfur atoms into the C-6 and C-8 positions of the octanoyl moiety bound to the lipoyl domains of lipoate-dependent enzymes, thereby converting the octanoylated domains into lipoylated derivatives. The sequence is that of Lipoyl synthase, mitochondrial from Phaeosphaeria nodorum (strain SN15 / ATCC MYA-4574 / FGSC 10173) (Glume blotch fungus).